Here is a 322-residue protein sequence, read N- to C-terminus: MDETLLDDIIRRLLATNNGRTVKQAQITETEIRQLCLASKEVFLSQPNLLELEAPIKICGDVHGQFPDLLRLFEYGGYPPAANYLFLGDYVDRGKQSIETICLLLAYKVKYKFNFFLLRGNHECASINRVYGFYDECKRRYNVRLWKTFTECFNCLPVSALIDDKILCMHGGLSPDIKSLDDIRRIPRPIDVPDQGILCDLLWADPDREIQGWGENDRGVSYTFGADKVAEFLQTHDLDLICRAHQVVEDGYEFFAKRQLVTIFSAPNYCGEFDNAGALMSVDDSLTCSFQILKASEKKGRFGFNNNVPRPGTPPHKGGKGR.

Position 1 is an N-acetylmethionine (Met1). The Mn(2+) site is built by Asp61, His63, Asp89, and Asn121. His122 acts as the Proton donor in catalysis. Residues His170 and His245 each coordinate Mn(2+). The tract at residues 303–322 is disordered; it reads GFNNNVPRPGTPPHKGGKGR.

This sequence belongs to the PPP phosphatase family. PP-1 subfamily. Mn(2+) serves as cofactor. Strongly up-regulated within developing flowers, especially in the tapetum, the developing and mature pollen and in the ovaries.

The protein resides in the nucleus. It is found in the cytoplasm. It carries out the reaction O-phospho-L-seryl-[protein] + H2O = L-seryl-[protein] + phosphate. It catalyses the reaction O-phospho-L-threonyl-[protein] + H2O = L-threonyl-[protein] + phosphate. Its activity is regulated as follows. Phosphatase activity is strongly reduced by the protein phosphatase inhibitor 2 (I-2). Functionally, serine/threonine-protein phosphatase that possesses phosphatase activity toward para-nitrophenyl phosphate (pNPP) in vitro. The polypeptide is Serine/threonine-protein phosphatase PP1 isozyme 6 (Arabidopsis thaliana (Mouse-ear cress)).